The following is a 442-amino-acid chain: Putative mannan endo-1,6-alpha-mannosidase C970.02 (442 aa).

The signal sequence occupies residues 1–19; it reads MSLTIFISLATILFSFAEA. N-linked (GlcNAc...) asparagine glycans are attached at residues asparagine 25, asparagine 82, asparagine 107, asparagine 131, asparagine 201, asparagine 236, asparagine 261, asparagine 264, asparagine 277, and asparagine 361.

The protein belongs to the glycosyl hydrolase 76 family.

The catalysed reaction is Random hydrolysis of (1-&gt;6)-alpha-D-mannosidic linkages in unbranched (1-&gt;6)-mannans.. The polypeptide is Putative mannan endo-1,6-alpha-mannosidase C970.02 (Schizosaccharomyces pombe (strain 972 / ATCC 24843) (Fission yeast)).